The following is a 530-amino-acid chain: DNA damage-binding protein cmr1 (530 aa).

2 disordered regions span residues 34-115 and 224-250; these read VGLF…RKSD and TKPVSAATHDEDEEDDDDDPDPVLTTL. The segment covering 52-62 has biased composition (basic residues); that stretch reads AKKKKPAPKKV. Residues 89-108 are compositionally biased toward basic and acidic residues; it reads EVAKRKADEHDAALQEAERA. Residues 188–229 form a WD 1 repeat; that stretch reads LTPERIYAMTFHPSESKPLIFAGDKMGHLGVLDASQTKPVSA. Residues 233–244 show a composition bias toward acidic residues; sequence DEDEEDDDDDPD. WD repeat units lie at residues 252-292, 302-339, 344-384, 389-430, 453-496, and 499-530; these read PHTR…SVER, VPISGLDMALDDPHCLYWTTLDGEFGRYDMRTPRQDSA, LSDK…HKSP, EHES…ASWK, GRWV…LAQL, and DGITAVPAVAVFHRSKNWVAGGTASGKICLWM.

The protein belongs to the WD repeat DDB2/WDR76 family.

DNA-binding protein that binds to both single- and double-stranded DNA. Binds preferentially to UV-damaged DNA. May be involved in DNA-metabolic processes. In Aspergillus terreus (strain NIH 2624 / FGSC A1156), this protein is DNA damage-binding protein cmr1.